A 494-amino-acid polypeptide reads, in one-letter code: Probable cytosol aminopeptidase (494 aa).

2 residues coordinate Mn(2+): K260 and D265. The active site involves K272. Mn(2+) is bound by residues D283, D342, and E344. R346 is a catalytic residue.

It belongs to the peptidase M17 family. It depends on Mn(2+) as a cofactor.

Its subcellular location is the cytoplasm. It catalyses the reaction Release of an N-terminal amino acid, Xaa-|-Yaa-, in which Xaa is preferably Leu, but may be other amino acids including Pro although not Arg or Lys, and Yaa may be Pro. Amino acid amides and methyl esters are also readily hydrolyzed, but rates on arylamides are exceedingly low.. The enzyme catalyses Release of an N-terminal amino acid, preferentially leucine, but not glutamic or aspartic acids.. In terms of biological role, presumably involved in the processing and regular turnover of intracellular proteins. Catalyzes the removal of unsubstituted N-terminal amino acids from various peptides. This Bacillus mycoides (strain KBAB4) (Bacillus weihenstephanensis) protein is Probable cytosol aminopeptidase.